A 321-amino-acid polypeptide reads, in one-letter code: Acetyl-coenzyme A carboxylase carboxyl transferase subunit alpha (321 aa).

Residues 39 to 293 (RLEVKSQALT…KRALAEALRQ (255 aa)) form the CoA carboxyltransferase C-terminal domain.

It belongs to the AccA family. In terms of assembly, acetyl-CoA carboxylase is a heterohexamer composed of biotin carboxyl carrier protein (AccB), biotin carboxylase (AccC) and two subunits each of ACCase subunit alpha (AccA) and ACCase subunit beta (AccD).

Its subcellular location is the cytoplasm. The catalysed reaction is N(6)-carboxybiotinyl-L-lysyl-[protein] + acetyl-CoA = N(6)-biotinyl-L-lysyl-[protein] + malonyl-CoA. Its pathway is lipid metabolism; malonyl-CoA biosynthesis; malonyl-CoA from acetyl-CoA: step 1/1. In terms of biological role, component of the acetyl coenzyme A carboxylase (ACC) complex. First, biotin carboxylase catalyzes the carboxylation of biotin on its carrier protein (BCCP) and then the CO(2) group is transferred by the carboxyltransferase to acetyl-CoA to form malonyl-CoA. In Azoarcus sp. (strain BH72), this protein is Acetyl-coenzyme A carboxylase carboxyl transferase subunit alpha.